Here is a 469-residue protein sequence, read N- to C-terminus: Glutamate--tRNA ligase (469 aa).

Positions 9-19 (PSPTGFLHVGG) match the 'HIGH' region motif. Residues Cys-98, Cys-100, Cys-125, and Asp-127 each coordinate Zn(2+). The 'KMSKS' region motif lies at 236 to 240 (KLSKR). Lys-239 contributes to the ATP binding site.

The protein belongs to the class-I aminoacyl-tRNA synthetase family. Glutamate--tRNA ligase type 1 subfamily. In terms of assembly, monomer. Zn(2+) is required as a cofactor.

The protein localises to the cytoplasm. It catalyses the reaction tRNA(Glu) + L-glutamate + ATP = L-glutamyl-tRNA(Glu) + AMP + diphosphate. Functionally, catalyzes the attachment of glutamate to tRNA(Glu) in a two-step reaction: glutamate is first activated by ATP to form Glu-AMP and then transferred to the acceptor end of tRNA(Glu). In Shewanella halifaxensis (strain HAW-EB4), this protein is Glutamate--tRNA ligase.